Consider the following 401-residue polypeptide: Acetate kinase (401 aa).

Asn7 contributes to the Mg(2+) binding site. ATP is bound at residue Lys14. Arg90 is a substrate binding site. Asp147 acts as the Proton donor/acceptor in catalysis. Residues 207-211, 282-284, and 330-334 each bind ATP; these read HLGNG, DFR, and GVGEN. Residue Glu383 participates in Mg(2+) binding.

It belongs to the acetokinase family. Homodimer. The cofactor is Mg(2+). Mn(2+) serves as cofactor.

It is found in the cytoplasm. It carries out the reaction acetate + ATP = acetyl phosphate + ADP. It participates in metabolic intermediate biosynthesis; acetyl-CoA biosynthesis; acetyl-CoA from acetate: step 1/2. In terms of biological role, catalyzes the formation of acetyl phosphate from acetate and ATP. Can also catalyze the reverse reaction. In Clostridium novyi (strain NT), this protein is Acetate kinase.